Here is a 79-residue protein sequence, read N- to C-terminus: Short neurotoxin 1/5 (79 aa).

The first 21 residues, 1–21 (MKTLLLTLVMVTIMCLDLGYT), serve as a signal peptide directing secretion. Disulfide bonds link C24–C41, C34–C59, C63–C71, and C72–C77.

The protein belongs to the three-finger toxin family. Short-chain subfamily. Type III alpha-neurotoxin sub-subfamily. In terms of tissue distribution, expressed by the venom gland.

It is found in the secreted. Functionally, binds with high affinity to muscle nicotinic acetylcholine receptor (nAChR) and inhibit acetylcholine from binding to the receptor, thereby impairing neuromuscular transmission. Compete with the binding of alpha-bungarotoxin on muscle AChR (from Torpedo) with an IC(50) of 0.31 uM (SNTX1) and 3.1 uM (SNTX5). Is able of exerting muscle paralysis, spasms and increased respiration. The chain is Short neurotoxin 1/5 from Pseudonaja textilis (Eastern brown snake).